We begin with the raw amino-acid sequence, 724 residues long: Methionine--tRNA ligase (724 aa).

Positions 12 to 22 (PYVNNIPHLGN) match the 'HIGH' region motif. Zn(2+) is bound by residues Cys-143, Cys-146, Cys-155, and Cys-158. Positions 330 to 334 (KFSKS) match the 'KMSKS' region motif. Residue Lys-333 participates in ATP binding. Positions 560–665 (FREKVLLKVV…KNPIPGERII (106 aa)) constitute a tRNA-binding domain.

It belongs to the class-I aminoacyl-tRNA synthetase family. MetG type 1 subfamily. As to quaternary structure, homodimer. Zn(2+) is required as a cofactor.

It is found in the cytoplasm. The enzyme catalyses tRNA(Met) + L-methionine + ATP = L-methionyl-tRNA(Met) + AMP + diphosphate. Functionally, is required not only for elongation of protein synthesis but also for the initiation of all mRNA translation through initiator tRNA(fMet) aminoacylation. This Borrelia garinii subsp. bavariensis (strain ATCC BAA-2496 / DSM 23469 / PBi) (Borreliella bavariensis) protein is Methionine--tRNA ligase.